A 748-amino-acid polypeptide reads, in one-letter code: Phosphoribosylformylglycinamidine synthase subunit PurL (748 aa).

The active site involves histidine 47. ATP-binding residues include tyrosine 50 and lysine 90. Glutamate 92 lines the Mg(2+) pocket. Residues 93-96 (SHNH) and arginine 115 contribute to the substrate site. The active-site Proton acceptor is the histidine 94. Residue aspartate 116 participates in Mg(2+) binding. Glutamine 240 serves as a coordination point for substrate. Mg(2+) is bound at residue aspartate 268. 312-314 (ESQ) lines the substrate pocket. Positions 500 and 537 each coordinate ATP. Asparagine 538 is a binding site for Mg(2+). Serine 540 is a binding site for substrate.

It belongs to the FGAMS family. Monomer. Part of the FGAM synthase complex composed of 1 PurL, 1 PurQ and 2 PurS subunits.

It localises to the cytoplasm. The enzyme catalyses N(2)-formyl-N(1)-(5-phospho-beta-D-ribosyl)glycinamide + L-glutamine + ATP + H2O = 2-formamido-N(1)-(5-O-phospho-beta-D-ribosyl)acetamidine + L-glutamate + ADP + phosphate + H(+). Its pathway is purine metabolism; IMP biosynthesis via de novo pathway; 5-amino-1-(5-phospho-D-ribosyl)imidazole from N(2)-formyl-N(1)-(5-phospho-D-ribosyl)glycinamide: step 1/2. In terms of biological role, part of the phosphoribosylformylglycinamidine synthase complex involved in the purines biosynthetic pathway. Catalyzes the ATP-dependent conversion of formylglycinamide ribonucleotide (FGAR) and glutamine to yield formylglycinamidine ribonucleotide (FGAM) and glutamate. The FGAM synthase complex is composed of three subunits. PurQ produces an ammonia molecule by converting glutamine to glutamate. PurL transfers the ammonia molecule to FGAR to form FGAM in an ATP-dependent manner. PurS interacts with PurQ and PurL and is thought to assist in the transfer of the ammonia molecule from PurQ to PurL. The polypeptide is Phosphoribosylformylglycinamidine synthase subunit PurL (Leptospira biflexa serovar Patoc (strain Patoc 1 / Ames)).